The primary structure comprises 379 residues: Chaperone protein DnaJ (379 aa).

Positions 5-70 (DYYEVLGLSK…EKKAMYDQYG (66 aa)) constitute a J domain. The CR-type zinc finger occupies 136–214 (GCKKDIRIHT…CHGDGRVHKA (79 aa)). Residues Cys-149, Cys-152, Cys-166, Cys-169, Cys-188, Cys-191, Cys-202, and Cys-205 each coordinate Zn(2+). CXXCXGXG motif repeat units follow at residues 149–156 (CDTCHGTG), 166–173 (CSHCHGSG), 188–195 (CPSCHGTG), and 202–209 (CRSCHGDG).

This sequence belongs to the DnaJ family. Homodimer. It depends on Zn(2+) as a cofactor.

The protein localises to the cytoplasm. Its function is as follows. Participates actively in the response to hyperosmotic and heat shock by preventing the aggregation of stress-denatured proteins and by disaggregating proteins, also in an autonomous, DnaK-independent fashion. Unfolded proteins bind initially to DnaJ; upon interaction with the DnaJ-bound protein, DnaK hydrolyzes its bound ATP, resulting in the formation of a stable complex. GrpE releases ADP from DnaK; ATP binding to DnaK triggers the release of the substrate protein, thus completing the reaction cycle. Several rounds of ATP-dependent interactions between DnaJ, DnaK and GrpE are required for fully efficient folding. Also involved, together with DnaK and GrpE, in the DNA replication of plasmids through activation of initiation proteins. This chain is Chaperone protein DnaJ, found in Mannheimia haemolytica (Pasteurella haemolytica).